A 453-amino-acid polypeptide reads, in one-letter code: Bifunctional protein GlmU (453 aa).

The interval 1-227 (MNKLSVVILA…LMEVEGVNNR (227 aa)) is pyrophosphorylase. Residues 9–12 (LAAG), Lys-23, Gln-74, 79–80 (GT), 101–103 (YGD), Gly-138, Glu-152, Asn-167, and Asn-225 each bind UDP-N-acetyl-alpha-D-glucosamine. Asp-103 is a binding site for Mg(2+). Asn-225 contributes to the Mg(2+) binding site. The tract at residues 228–248 (LQLANLERHFQRKQVEKLLLA) is linker. Positions 249-453 (GVTFADPARF…ISNWQRPKRK (205 aa)) are N-acetyltransferase. Residues Arg-331 and Lys-349 each contribute to the UDP-N-acetyl-alpha-D-glucosamine site. Catalysis depends on His-361, which acts as the Proton acceptor. UDP-N-acetyl-alpha-D-glucosamine is bound by residues Tyr-364 and Asn-375. Acetyl-CoA-binding positions include Ala-378, 384–385 (NY), Ser-403, Ala-421, and Arg-438.

The protein in the N-terminal section; belongs to the N-acetylglucosamine-1-phosphate uridyltransferase family. In the C-terminal section; belongs to the transferase hexapeptide repeat family. Homotrimer. Mg(2+) serves as cofactor.

It localises to the cytoplasm. It carries out the reaction alpha-D-glucosamine 1-phosphate + acetyl-CoA = N-acetyl-alpha-D-glucosamine 1-phosphate + CoA + H(+). The catalysed reaction is N-acetyl-alpha-D-glucosamine 1-phosphate + UTP + H(+) = UDP-N-acetyl-alpha-D-glucosamine + diphosphate. It functions in the pathway nucleotide-sugar biosynthesis; UDP-N-acetyl-alpha-D-glucosamine biosynthesis; N-acetyl-alpha-D-glucosamine 1-phosphate from alpha-D-glucosamine 6-phosphate (route II): step 2/2. The protein operates within nucleotide-sugar biosynthesis; UDP-N-acetyl-alpha-D-glucosamine biosynthesis; UDP-N-acetyl-alpha-D-glucosamine from N-acetyl-alpha-D-glucosamine 1-phosphate: step 1/1. Its pathway is bacterial outer membrane biogenesis; LPS lipid A biosynthesis. In terms of biological role, catalyzes the last two sequential reactions in the de novo biosynthetic pathway for UDP-N-acetylglucosamine (UDP-GlcNAc). The C-terminal domain catalyzes the transfer of acetyl group from acetyl coenzyme A to glucosamine-1-phosphate (GlcN-1-P) to produce N-acetylglucosamine-1-phosphate (GlcNAc-1-P), which is converted into UDP-GlcNAc by the transfer of uridine 5-monophosphate (from uridine 5-triphosphate), a reaction catalyzed by the N-terminal domain. The polypeptide is Bifunctional protein GlmU (Histophilus somni (strain 129Pt) (Haemophilus somnus)).